The chain runs to 235 residues: Small ribosomal subunit protein uS2c (235 aa).

It belongs to the universal ribosomal protein uS2 family.

The protein localises to the plastid. The protein resides in the chloroplast. In Anthoceros angustus (Hornwort), this protein is Small ribosomal subunit protein uS2c (rps2).